Reading from the N-terminus, the 380-residue chain is Queuine tRNA-ribosyltransferase (380 aa).

The active-site Proton acceptor is D96. Substrate contacts are provided by residues 96 to 100 (DSGGF), D150, Q193, and G220. Residues 251–257 (GVGAPDS) are RNA binding. D270 (nucleophile) is an active-site residue. The interval 275–279 (TRIAR) is RNA binding; important for wobble base 34 recognition. Zn(2+) is bound by residues C308, C310, C313, and H339.

Belongs to the queuine tRNA-ribosyltransferase family. As to quaternary structure, homodimer. Within each dimer, one monomer is responsible for RNA recognition and catalysis, while the other monomer binds to the replacement base PreQ1. Requires Zn(2+) as cofactor.

The catalysed reaction is 7-aminomethyl-7-carbaguanine + guanosine(34) in tRNA = 7-aminomethyl-7-carbaguanosine(34) in tRNA + guanine. Its pathway is tRNA modification; tRNA-queuosine biosynthesis. In terms of biological role, catalyzes the base-exchange of a guanine (G) residue with the queuine precursor 7-aminomethyl-7-deazaguanine (PreQ1) at position 34 (anticodon wobble position) in tRNAs with GU(N) anticodons (tRNA-Asp, -Asn, -His and -Tyr). Catalysis occurs through a double-displacement mechanism. The nucleophile active site attacks the C1' of nucleotide 34 to detach the guanine base from the RNA, forming a covalent enzyme-RNA intermediate. The proton acceptor active site deprotonates the incoming PreQ1, allowing a nucleophilic attack on the C1' of the ribose to form the product. After dissociation, two additional enzymatic reactions on the tRNA convert PreQ1 to queuine (Q), resulting in the hypermodified nucleoside queuosine (7-(((4,5-cis-dihydroxy-2-cyclopenten-1-yl)amino)methyl)-7-deazaguanosine). This Streptococcus equi subsp. equi (strain 4047) protein is Queuine tRNA-ribosyltransferase.